Here is an 808-residue protein sequence, read N- to C-terminus: Phosphoinositide phosphatase SAC2 (808 aa).

Residues 158-551 enclose the SAC domain; that stretch reads LCTVDLTKDF…GDTLALQYGG (394 aa). Residues 429–476 are disordered; it reads FQNQNPSTLENDDGECSTYDPPSKDETAPNLVVENGNDSKDAKEDQQK. The segment covering 465–476 has biased composition (basic and acidic residues); that stretch reads NDSKDAKEDQQK. Residues 487-498 carry the Phosphatase catalytic core motif; that stretch reads RTNCIDCLDRTN.

As to quaternary structure, component of the PI(3,5)P2 regulatory complex at least composed of ATG18, SAC/FIG4, FAB1 and VAC14. It depends on Mg(2+) as a cofactor. As to expression, ubiquitous with a higher level of expression in young seedlings than in other tissues.

The protein resides in the vacuole membrane. The enzyme catalyses a 1,2-diacyl-sn-glycero-3-phospho-(1D-myo-inositol-3,5-bisphosphate) + H2O = a 1,2-diacyl-sn-glycero-3-phospho-(1D-myo-inositol-3-phosphate) + phosphate. Functionally, the PI(3,5)P2 regulatory complex regulates both the synthesis and turnover of phosphatidylinositol 3,5-bisphosphate (PtdIns(3,5)P2). This is Phosphoinositide phosphatase SAC2 (SAC2) from Arabidopsis thaliana (Mouse-ear cress).